Here is a 190-residue protein sequence, read N- to C-terminus: Nucleoside triphosphate pyrophosphatase (190 aa).

D69 acts as the Proton acceptor in catalysis.

The protein belongs to the Maf family. Requires a divalent metal cation as cofactor.

The protein localises to the cytoplasm. It carries out the reaction a ribonucleoside 5'-triphosphate + H2O = a ribonucleoside 5'-phosphate + diphosphate + H(+). The enzyme catalyses a 2'-deoxyribonucleoside 5'-triphosphate + H2O = a 2'-deoxyribonucleoside 5'-phosphate + diphosphate + H(+). Nucleoside triphosphate pyrophosphatase. May have a dual role in cell division arrest and in preventing the incorporation of modified nucleotides into cellular nucleic acids. This is Nucleoside triphosphate pyrophosphatase from Helicobacter pylori (strain P12).